We begin with the raw amino-acid sequence, 217 residues long: Probable transaldolase (217 aa).

The active-site Schiff-base intermediate with substrate is the lysine 83.

The protein belongs to the transaldolase family. Type 3B subfamily.

It localises to the cytoplasm. The catalysed reaction is D-sedoheptulose 7-phosphate + D-glyceraldehyde 3-phosphate = D-erythrose 4-phosphate + beta-D-fructose 6-phosphate. Its pathway is carbohydrate degradation; pentose phosphate pathway; D-glyceraldehyde 3-phosphate and beta-D-fructose 6-phosphate from D-ribose 5-phosphate and D-xylulose 5-phosphate (non-oxidative stage): step 2/3. Transaldolase is important for the balance of metabolites in the pentose-phosphate pathway. This Coprothermobacter proteolyticus (strain ATCC 35245 / DSM 5265 / OCM 4 / BT) protein is Probable transaldolase.